Here is a 161-residue protein sequence, read N- to C-terminus: 2-C-methyl-D-erythritol 2,4-cyclodiphosphate synthase (161 aa).

2 residues coordinate a divalent metal cation: Asp8 and His10. 4-CDP-2-C-methyl-D-erythritol 2-phosphate is bound by residues 8 to 10 (DVH) and 34 to 35 (HS). His42 is an a divalent metal cation binding site. Residues 56–58 (DIG), 61–65 (FPDTD), 100–106 (AQSPKMA), 132–135 (TTEE), and Phe139 contribute to the 4-CDP-2-C-methyl-D-erythritol 2-phosphate site.

The protein belongs to the IspF family. Homotrimer. Requires a divalent metal cation as cofactor.

It carries out the reaction 4-CDP-2-C-methyl-D-erythritol 2-phosphate = 2-C-methyl-D-erythritol 2,4-cyclic diphosphate + CMP. Its pathway is isoprenoid biosynthesis; isopentenyl diphosphate biosynthesis via DXP pathway; isopentenyl diphosphate from 1-deoxy-D-xylulose 5-phosphate: step 4/6. Involved in the biosynthesis of isopentenyl diphosphate (IPP) and dimethylallyl diphosphate (DMAPP), two major building blocks of isoprenoid compounds. Catalyzes the conversion of 4-diphosphocytidyl-2-C-methyl-D-erythritol 2-phosphate (CDP-ME2P) to 2-C-methyl-D-erythritol 2,4-cyclodiphosphate (ME-CPP) with a corresponding release of cytidine 5-monophosphate (CMP). The protein is 2-C-methyl-D-erythritol 2,4-cyclodiphosphate synthase of Clostridioides difficile (strain 630) (Peptoclostridium difficile).